Here is a 298-residue protein sequence, read N- to C-terminus: Cyclin-dependent kinase 2 (298 aa).

In terms of domain architecture, Protein kinase spans F4–F286. Residues I10–V18, K33, E81–L83, and D86 contribute to the ATP site. Phosphothreonine is present on T14. Residue Y15 is modified to Phosphotyrosine. D127 acts as the Proton acceptor in catalysis. ATP-binding positions include K129–N132 and D145. T160 carries the phosphothreonine; by CAK modification.

The protein belongs to the protein kinase superfamily. CMGC Ser/Thr protein kinase family. CDC2/CDKX subfamily.

It catalyses the reaction L-seryl-[protein] + ATP = O-phospho-L-seryl-[protein] + ADP + H(+). The catalysed reaction is L-threonyl-[protein] + ATP = O-phospho-L-threonyl-[protein] + ADP + H(+). Phosphorylation at Thr-14 or Tyr-15 inactivates the enzyme, while phosphorylation at Thr-160 activates it. In terms of biological role, serine/threonine-protein kinase involved in the control of the cell cycle; essential for meiosis, but dispensable for mitosis. Triggers duplication of centrosomes and DNA. Acts at the G1-S transition to promote the E2F transcriptional program and the initiation of DNA synthesis, and modulates G2 progression; controls the timing of entry into mitosis/meiosis by controlling the subsequent activation of cyclin B/CDK1 by phosphorylation, and coordinates the activation of cyclin B/CDK1 at the centrosome and in the nucleus. Crucial role in orchestrating a fine balance between cellular proliferation, cell death, and DNA repair in embryonic stem cells (ESCs). Activity of CDK2 is maximal during S phase and G2; activated by interaction with cyclin E during the early stages of DNA synthesis to permit G1-S transition, and subsequently activated by cyclin A2 (cyclin A1 in germ cells) during the late stages of DNA replication to drive the transition from S phase to mitosis, the G2 phase. This chain is Cyclin-dependent kinase 2 (cdk2), found in Carassius auratus (Goldfish).